The following is a 440-amino-acid chain: Phosphatidylcholine-sterol acyltransferase (440 aa).

Residues 1-24 (MGPPGSPWQWVLLLLGLLLPPAAP) form the signal peptide. The N-linked (GlcNAc...) asparagine glycan is linked to N44. C74 and C98 are oxidised to a cystine. N108 is a glycosylation site (N-linked (GlcNAc...) asparagine). S205 acts as the Nucleophile in catalysis. N296 carries N-linked (GlcNAc...) asparagine glycosylation. The cysteines at positions 337 and 380 are disulfide-linked. Residues D369 and H401 each act as charge relay system in the active site. An N-linked (GlcNAc...) asparagine glycan is attached at N408.

It belongs to the AB hydrolase superfamily. Lipase family. Detected in blood plasma (at protein level). Highly expressed in liver.

It is found in the secreted. The catalysed reaction is a sterol + a 1,2-diacyl-sn-glycero-3-phosphocholine = a sterol ester + a 1-acyl-sn-glycero-3-phosphocholine. The enzyme catalyses a 1-O-alkyl-2-acetyl-sn-glycero-3-phosphocholine + H2O = a 1-O-alkyl-sn-glycero-3-phosphocholine + acetate + H(+). It catalyses the reaction a 1-hexadecanoyl-2-acyl-sn-glycero-3-phosphocholine + (24S)-hydroxycholesterol = (24S)-24-hydroxycholesterol ester + 1-hexadecanoyl-sn-glycero-3-phosphocholine. It carries out the reaction (24S)-hydroxycholesterol + 1-hexadecanoyl-2-(9Z,12Z-octadecadienoyl)-sn-glycero-3-phosphocholine = (24S)-hydroxycholesterol 3-linoleoate + 1-hexadecanoyl-sn-glycero-3-phosphocholine. The catalysed reaction is 1-hexadecanoyl-2-(5Z,8Z,11Z,14Z-eicosatetraenoyl)-sn-glycero-3-phosphocholine + cholesterol = cholesteryl (5Z,8Z,11Z,14Z)-eicosatetraenoate + 1-hexadecanoyl-sn-glycero-3-phosphocholine. The enzyme catalyses 1-hexadecanoyl-2-(9Z-octadecenoyl)-sn-glycero-3-phosphocholine + cholesterol = cholesteryl (9Z-octadecenoate) + 1-hexadecanoyl-sn-glycero-3-phosphocholine. It catalyses the reaction 1-hexadecanoyl-2-(8Z,11Z,14Z-eicosatrienoyl)-sn-glycero-3-phosphocholine + cholesterol = cholesteryl (8Z,11Z,14Z)-eicosatrienoate + 1-hexadecanoyl-sn-glycero-3-phosphocholine. It carries out the reaction 1-hexadecanoyl-2-(5Z,8Z,11Z-eicosatrienoyl)-sn-glycero-3-phosphocholine + cholesterol = cholesteryl (5Z,8Z,11Z)-eicosatrienoate + 1-hexadecanoyl-sn-glycero-3-phosphocholine. The catalysed reaction is 1-hexadecanoyl-2-(5Z,8Z,11Z,14Z,17Z-eicosapentaenoyl)-sn-glycero-3-phosphocholine + cholesterol = (5Z,8Z,11Z,14Z,17Z-eicosapentaenoyl)-cholesterol + 1-hexadecanoyl-sn-glycero-3-phosphocholine. The enzyme catalyses 1-hexadecanoyl-2-(9Z,12Z-octadecadienoyl)-sn-glycero-3-phosphocholine + cholesterol = cholesteryl (9Z,12Z)-octadecadienoate + 1-hexadecanoyl-sn-glycero-3-phosphocholine. It catalyses the reaction 1-hexadecanoyl-2-(6Z,9Z,12Z-octadecatrienoyl)-sn-glycero-3-phosphocholine + cholesterol = (6Z,9Z,12Z-octadecatrienoyl)-cholesterol + 1-hexadecanoyl-sn-glycero-3-phosphocholine. It carries out the reaction 1-hexadecanoyl-2-(11Z,14Z,17Z-eicosatrienoyl)-sn-glycero-3-phosphocholine + cholesterol = (11Z,14Z,17Z-eicosatrienoyl)-cholesterol + 1-hexadecanoyl-sn-glycero-3-phosphocholine. The catalysed reaction is 1-hexadecanoyl-2-(9Z,12Z,15Z-octadecatrienoyl)-sn-glycero-3-phosphocholine + cholesterol = (9Z,12Z,15Z-octadecatrienoyl)-cholesterol + 1-hexadecanoyl-sn-glycero-3-phosphocholine. The enzyme catalyses 1-hexadecanoyl-2-(9Z,12Z-octadecadienoyl)-sn-glycero-3-phosphocholine + H2O = (9Z,12Z)-octadecadienoate + 1-hexadecanoyl-sn-glycero-3-phosphocholine + H(+). It catalyses the reaction 1-hexadecanoyl-2-(5Z,8Z,11Z,14Z-eicosatetraenoyl)-sn-glycero-3-phosphocholine + H2O = 1-hexadecanoyl-sn-glycero-3-phosphocholine + (5Z,8Z,11Z,14Z)-eicosatetraenoate + H(+). It carries out the reaction a 1-O-alkyl-2-acetyl-sn-glycero-3-phosphocholine + 1-hexadecanoyl-sn-glycero-3-phosphocholine = 1-hexadecanoyl-2-acetyl-sn-glycero-3-phosphocholine + a 1-O-alkyl-sn-glycero-3-phosphocholine. In terms of biological role, central enzyme in the extracellular metabolism of plasma lipoproteins. Synthesized mainly in the liver and secreted into plasma where it converts cholesterol and phosphatidylcholines (lecithins) to cholesteryl esters and lysophosphatidylcholines on the surface of high and low density lipoproteins (HDLs and LDLs). The cholesterol ester is then transported back to the liver. Also produced in the brain by primary astrocytes, and esterifies free cholesterol on nascent APOE-containing lipoproteins secreted from glia and influences cerebral spinal fluid (CSF) APOE- and APOA1 levels. Together with APOE and the cholesterol transporter ABCA1, plays a key role in the maturation of glial-derived, nascent lipoproteins. Required for remodeling high-density lipoprotein particles into their spherical forms. Has a preference for plasma 16:0-18:2 or 18:O-18:2 phosphatidylcholines. Catalyzes the hydrolysis of 1-O-alkyl-2-acetyl-sn-glycero-3-phosphocholine (platelet-activating factor or PAF) to 1-O-alkyl-sn-glycero-3-phosphocholine (lyso-PAF). Also catalyzes the transfer of the acetate group from PAF to 1-hexadecanoyl-sn-glycero-3-phosphocholine forming lyso-PAF. Catalyzes the esterification of (24S)-hydroxycholesterol (24(S)OH-C), also known as cerebrosterol to produce 24(S)OH-C monoesters. This chain is Phosphatidylcholine-sterol acyltransferase (LCAT), found in Oryctolagus cuniculus (Rabbit).